We begin with the raw amino-acid sequence, 328 residues long: MKSIKGLGKLLLASSILFSSSAFAKTIIKLGHYNSDIHPSHIALQEYFKKTIENETNHKYEIRLYPNNQLGGEDQIVNGLRNGTIEAGITGLLLQNVDPIFGVWEWPYLFKDNQEAKKVLESPIANKIGQKMEKYGIKLLAYGMNGFRVISSNKKLEKFDDFKGLRLRVPLNSLFVDWAKAMNINPQSMPLSEVFTALEQKVIDGQENPYMLIKDSGLYEVQKYIIQSNHIFSPGLLQISLKTWNKIPKEDQIIFEKAAKLYQEKEWELAIKTELEVKDYLAKHGNEIIVPSEAFKNDMVNASKVLYDSFYKKYDWAKDVVQKINEAK.

The first 24 residues, 1–24 (MKSIKGLGKLLLASSILFSSSAFA), serve as a signal peptide directing secretion.

It belongs to the bacterial solute-binding protein 7 family.

Its subcellular location is the periplasm. This is an uncharacterized protein from Haemophilus influenzae (strain ATCC 51907 / DSM 11121 / KW20 / Rd).